The following is a 151-amino-acid chain: 3-hydroxyacyl-[acyl-carrier-protein] dehydratase FabZ (151 aa).

The active site involves histidine 57.

Belongs to the thioester dehydratase family. FabZ subfamily.

It is found in the cytoplasm. It catalyses the reaction a (3R)-hydroxyacyl-[ACP] = a (2E)-enoyl-[ACP] + H2O. Involved in unsaturated fatty acids biosynthesis. Catalyzes the dehydration of short chain beta-hydroxyacyl-ACPs and long chain saturated and unsaturated beta-hydroxyacyl-ACPs. This is 3-hydroxyacyl-[acyl-carrier-protein] dehydratase FabZ from Synechococcus sp. (strain CC9605).